Consider the following 169-residue polypeptide: Allophycocyanin subunit beta-18 (169 aa).

Asparagine 72 is subject to N4-methylasparagine. Residue cysteine 82 coordinates (2R,3E)-phycocyanobilin.

Belongs to the phycobiliprotein family. In terms of assembly, heterodimer of an alpha and a beta chain. Post-translationally, contains one covalently linked phycocyanobilin chromophore.

It is found in the plastid. The protein localises to the cyanelle thylakoid membrane. Its function is as follows. Light-harvesting photosynthetic bile pigment-protein from the phycobiliprotein complex. Allophycocyanin has a maximum absorption at approximately 650 nanometers. This chain is Allophycocyanin subunit beta-18 (apcF), found in Cyanophora paradoxa.